A 562-amino-acid chain; its full sequence is Phosphopantothenoylcysteine decarboxylase subunit SIS2 (562 aa).

Polar residues predominate over residues 1-10 (MTAVASTSGK). 3 disordered regions span residues 1-63 (MTAV…SNAT), 97-165 (FSDL…KDYD), and 490-562 (GYPK…DKHQ). The span at 27-42 (GQKEILLDHEDAKGKD) shows a compositional bias: basic and acidic residues. Composition is skewed to polar residues over residues 44-63 (IINS…SNAT) and 99-113 (DLKQ…TQLK). Phosphoserine is present on residues Ser-47, Ser-50, Ser-54, and Ser-56. The segment covering 121–134 (SPNSNPAPVSNSIP) has biased composition (low complexity). Residues 142–156 (NHTNTSRTTQLSGSP) are compositionally biased toward polar residues. A Phosphoserine modification is found at Ser-155. The segment covering 496–553 (EEEDDDEDEEEDDDEEEDTEDKNENNNDDDDDDDDDDDDDDDDDDDDDDDDEDEDEAE) has biased composition (acidic residues).

It belongs to the HFCD (homooligomeric flavin containing Cys decarboxylase) superfamily. In terms of assembly, interacts with the C-terminal domain of PPZ1. Component of the phosphopantothenoylcysteine decarboxylase (PPCDC) complex, a heterotrimer composed of CAB3, SIS2 and VHS3.

The protein localises to the nucleus. The protein resides in the cytoplasm. Functionally, component of the phosphopantothenoylcysteine decarboxylase (PPCDC) involved in the coenzyme A synthesis. Acts as an inhibitory subunit of protein phosphatase PPZ1, which is involved in many cellular processes such as G1-S transition or salt tolerance. Also modulates the expression of the ENA1 ATPase. The chain is Phosphopantothenoylcysteine decarboxylase subunit SIS2 (SIS2) from Saccharomyces cerevisiae (strain ATCC 204508 / S288c) (Baker's yeast).